The following is a 483-amino-acid chain: Phosphomethylpyrimidine synthase (483 aa).

Substrate-binding positions include asparagine 97, methionine 126, tyrosine 156, histidine 192, 212 to 214 (SRG), 253 to 256 (DSLR), and glutamate 292. Histidine 296 contributes to the Zn(2+) binding site. Tyrosine 319 provides a ligand contact to substrate. Zn(2+) is bound at residue histidine 360. Residues cysteine 440, cysteine 443, and cysteine 448 each coordinate [4Fe-4S] cluster.

The protein belongs to the ThiC family. It depends on [4Fe-4S] cluster as a cofactor.

It carries out the reaction 5-amino-1-(5-phospho-beta-D-ribosyl)imidazole + S-adenosyl-L-methionine = 4-amino-2-methyl-5-(phosphooxymethyl)pyrimidine + CO + 5'-deoxyadenosine + formate + L-methionine + 3 H(+). The protein operates within cofactor biosynthesis; thiamine diphosphate biosynthesis. Catalyzes the synthesis of the hydroxymethylpyrimidine phosphate (HMP-P) moiety of thiamine from aminoimidazole ribotide (AIR) in a radical S-adenosyl-L-methionine (SAM)-dependent reaction. This is Phosphomethylpyrimidine synthase from Parasynechococcus marenigrum (strain WH8102).